Here is a 124-residue protein sequence, read N- to C-terminus: Small ribosomal subunit protein uS12 (124 aa).

Asp-89 is modified (3-methylthioaspartic acid).

Belongs to the universal ribosomal protein uS12 family. In terms of assembly, part of the 30S ribosomal subunit. Contacts proteins S8 and S17. May interact with IF1 in the 30S initiation complex.

Functionally, with S4 and S5 plays an important role in translational accuracy. Its function is as follows. Interacts with and stabilizes bases of the 16S rRNA that are involved in tRNA selection in the A site and with the mRNA backbone. Located at the interface of the 30S and 50S subunits, it traverses the body of the 30S subunit contacting proteins on the other side and probably holding the rRNA structure together. The combined cluster of proteins S8, S12 and S17 appears to hold together the shoulder and platform of the 30S subunit. This is Small ribosomal subunit protein uS12 from Psychrobacter sp. (strain PRwf-1).